The primary structure comprises 93 residues: Large ribosomal subunit protein uL23 (93 aa).

It belongs to the universal ribosomal protein uL23 family. Part of the 50S ribosomal subunit. Contacts protein L29, and trigger factor when it is bound to the ribosome.

In terms of biological role, one of the early assembly proteins it binds 23S rRNA. One of the proteins that surrounds the polypeptide exit tunnel on the outside of the ribosome. Forms the main docking site for trigger factor binding to the ribosome. This chain is Large ribosomal subunit protein uL23, found in Natranaerobius thermophilus (strain ATCC BAA-1301 / DSM 18059 / JW/NM-WN-LF).